Reading from the N-terminus, the 131-residue chain is Profilin-3 (131 aa).

Belongs to the profilin family. Occurs in many kinds of cells as a complex with monomeric actin in a 1:1 ratio.

The protein resides in the cytoplasm. It localises to the cytoskeleton. Binds to actin and affects the structure of the cytoskeleton. At high concentrations, profilin prevents the polymerization of actin, whereas it enhances it at low concentrations. By binding to PIP2, it inhibits the formation of IP3 and DG. The chain is Profilin-3 from Lilium longiflorum (Trumpet lily).